Here is a 648-residue protein sequence, read N- to C-terminus: Sodium/nucleoside cotransporter 1 (648 aa).

At 1 to 83 (MADDTPRQRE…LCREHWQLFE (83 aa)) the chain is on the cytoplasmic side. A helical transmembrane segment spans residues 84-104 (WISKGLLSTAYIGFLIVACLL). At 105–108 (DFPR) the chain is on the extracellular side. Residues 109 to 129 (ALALFVITCVVLVFLAYNLLK) form a helical membrane-spanning segment. Over 130–147 (RLLGSKLKKCVKFQGHSC) the chain is Cytoplasmic. Residues 148 to 168 (LSLWLKRGLALAAGLGVILWL) form a helical membrane-spanning segment. Residues 169 to 175 (SLDTAQR) are Extracellular-facing. A helical transmembrane segment spans residues 176-196 (PEQLVSFAGICVFLVLLFAGS). Residues 197 to 201 (KHHRA) lie on the Cytoplasmic side of the membrane. A helical membrane pass occupies residues 202-222 (VSWRAVSWGLGLQFVLGLFVI). The Extracellular portion of the chain corresponds to 223-265 (RTEPGFVAFQWLGDQIRVFLSYTEAGSSFVFGEALVKDVFAFQ). A helical transmembrane segment spans residues 266–286 (VLPIIVFFSCVMSVLYYLGLM). Over 287-294 (QWVILKIA) the chain is Cytoplasmic. A helical transmembrane segment spans residues 295-318 (WLMQVTMGTSATETLSVAGNIFVS). Residues 319-339 (QTEAPLLIRPYLADMTLSEVH) lie on the Extracellular side of the membrane. Residues 340 to 360 (VVMTGGYATIAGSLLGAYISF) traverse the membrane as a helical segment. A topological domain (cytoplasmic) is located at residue Gly361. A helical membrane pass occupies residues 362-380 (IDASSLIAASVMAAPCALA). The Extracellular segment spans residues 381 to 427 (LSKLVYPEVEESKFRSEEGVKLTYGDAQNLVEAASAGAAISVKVVAN). Residues 428–448 (IAANLIAFLAVLAFINAALSW) traverse the membrane as a helical segment. Topologically, residues 449-470 (LGDMVDIQGLSFQLICSYVLRP) are cytoplasmic. The chain crosses the membrane as a helical span at residues 471–491 (VAFLMGVAWEDCPVVAELLGI). The Extracellular segment spans residues 492 to 531 (KLFLNEFVAYQELSQYKQRRLAGAEEWLGDKKQWISVRAE). Residues 532–552 (ILTTYALCGFANFSSIGIMLG) traverse the membrane as a helical segment. At 553 to 571 (GLTSMVPQRRSDFSQIVLR) the chain is on the cytoplasmic side. Residues 572–592 (ALITGAFVSLVNACVAGILYV) form a helical membrane-spanning segment. At 593 to 648 (PRGVEVDCMSLLNQTVSSSSFEVYLCCRQVFQNTSLEFGQEALHNCCRFYNHTVCT) the chain is on the extracellular side. 3 N-linked (GlcNAc...) asparagine glycosylation sites follow: Asn605, Asn625, and Asn643.

Belongs to the concentrative nucleoside transporter (CNT) (TC 2.A.41) family. N-glycosylated. N-glycosylation is required for localization to the plasma membrane and the transporter activity.

It localises to the cell membrane. The protein localises to the apical cell membrane. It catalyses the reaction uridine(out) + Na(+)(out) = uridine(in) + Na(+)(in). The catalysed reaction is thymidine(out) + Na(+)(out) = thymidine(in) + Na(+)(in). It carries out the reaction cytidine(out) + Na(+)(out) = cytidine(in) + Na(+)(in). The enzyme catalyses adenosine(out) + Na(+)(out) = adenosine(in) + Na(+)(in). With respect to regulation, due to its high apparent affinity but slow transport, adenosine could act as a negative regulator of pyrimidine transport under some conditions. Functionally, sodium and pyrimidine nucleoside symporter of the plasma membrane that imports uridine, thymidine and cytidine into cells by coupling their transport to the transmembrane sodium electrochemical gradient. Also transports adenosine, an atypical substrate transported with high apparent affinity, but low maximum velocity. Therefore, exhibits the transport characteristics of the nucleoside transport system cit or N2 subtype (N2/cit). Involved in renal nucleoside (re)absorption. This Mus musculus (Mouse) protein is Sodium/nucleoside cotransporter 1.